Consider the following 207-residue polypeptide: Uracil phosphoribosyltransferase (207 aa).

Residues arginine 77, arginine 102, and 129–137 each bind 5-phospho-alpha-D-ribose 1-diphosphate; that span reads DPMLATGGS. Residues isoleucine 192 and 197–199 contribute to the uracil site; that span reads GDA. Position 198 (aspartate 198) interacts with 5-phospho-alpha-D-ribose 1-diphosphate.

This sequence belongs to the UPRTase family. Mg(2+) is required as a cofactor.

The enzyme catalyses UMP + diphosphate = 5-phospho-alpha-D-ribose 1-diphosphate + uracil. It functions in the pathway pyrimidine metabolism; UMP biosynthesis via salvage pathway; UMP from uracil: step 1/1. Its activity is regulated as follows. Allosterically activated by GTP. Its function is as follows. Catalyzes the conversion of uracil and 5-phospho-alpha-D-ribose 1-diphosphate (PRPP) to UMP and diphosphate. The polypeptide is Uracil phosphoribosyltransferase (Ureaplasma parvum serovar 3 (strain ATCC 27815 / 27 / NCTC 11736)).